A 341-amino-acid chain; its full sequence is Protein huluwa (341 aa).

Residues 1 to 36 lie on the Extracellular side of the membrane; the sequence is MVTLSPAYLPSDGGTQAASAAPSVEENWVVQPSLTL. Residues 37 to 57 form a helical membrane-spanning segment; it reads LVLLLVPCVLLLFFLNCFLLF. The Cytoplasmic segment spans residues 58 to 341; that stretch reads HRLPAFSLRK…PMMCSKQYWI (284 aa). The VPPNSP motif signature appears at 206–211; the sequence is VPPNTP.

It belongs to the huluwa family. As to quaternary structure, interacts with axin1; leading to promote the tankyrase-mediated degradation of axin. Interacts with axin2; leading to promote the tankyrase-mediated degradation of axin.

It is found in the cell membrane. Functionally, key maternal determinant of the dorsal organizer and body axis formation in vertebrates that acts by promoting stabilization of beta-catenin (ctnnb1). Localizes on the plasma membrane of the future dorsal blastomeres in early blastulas and binds to and promotes the tankyrase-mediated degradation of axin (axin1 and axin2). Axin degradation results in stabilization and nuclear translocation of beta-catenin (ctnnb1) for activating organizer-specific target gene expression. The protein is Protein huluwa of Xenopus laevis (African clawed frog).